We begin with the raw amino-acid sequence, 419 residues long: D-inositol 3-phosphate glycosyltransferase (419 aa).

His-9 is a binding site for 1D-myo-inositol 3-phosphate. UDP-N-acetyl-alpha-D-glucosamine is bound by residues 15–16 (QP) and Gly-23. 1D-myo-inositol 3-phosphate-binding positions include 20-25 (DAGGMN), Lys-78, Tyr-110, Thr-134, and Arg-154. Positions 231, 236, and 295 each coordinate UDP-N-acetyl-alpha-D-glucosamine. Mg(2+) is bound by residues Tyr-304, Arg-305, and Ala-307. Residues Glu-317 and Glu-325 each coordinate UDP-N-acetyl-alpha-D-glucosamine. Residue Thr-331 participates in Mg(2+) binding.

This sequence belongs to the glycosyltransferase group 1 family. MshA subfamily. As to quaternary structure, homodimer.

The enzyme catalyses 1D-myo-inositol 3-phosphate + UDP-N-acetyl-alpha-D-glucosamine = 1D-myo-inositol 2-acetamido-2-deoxy-alpha-D-glucopyranoside 3-phosphate + UDP + H(+). In terms of biological role, catalyzes the transfer of a N-acetyl-glucosamine moiety to 1D-myo-inositol 3-phosphate to produce 1D-myo-inositol 2-acetamido-2-deoxy-glucopyranoside 3-phosphate in the mycothiol biosynthesis pathway. The sequence is that of D-inositol 3-phosphate glycosyltransferase from Corynebacterium jeikeium (strain K411).